The following is a 389-amino-acid chain: Tubulin-like protein CetZ3 (389 aa).

GTP contacts are provided by residues 10 to 14, 110 to 112, Glu-142, Asn-169, and Asn-187; these read QAGGK and GTG.

Belongs to the CetZ family.

Its subcellular location is the cytoplasm. In terms of biological role, involved in cell shape control. The protein is Tubulin-like protein CetZ3 of Haloferax volcanii (strain ATCC 29605 / DSM 3757 / JCM 8879 / NBRC 14742 / NCIMB 2012 / VKM B-1768 / DS2) (Halobacterium volcanii).